Consider the following 316-residue polypeptide: Glutathione synthetase (316 aa).

One can recognise an ATP-grasp domain in the interval 125-310; the sequence is KLFTAWFSDL…ITGMLMDAIE (186 aa). 151 to 207 lines the ATP pocket; that stretch reads WEKHSDIILKPLDGMGGASIFRVKEGDPNLGVIAETLTEHGTRYCMAQNYLPAIKDG. E281 and N283 together coordinate Mg(2+).

It belongs to the prokaryotic GSH synthase family. In terms of assembly, homotetramer. Mg(2+) is required as a cofactor. It depends on Mn(2+) as a cofactor.

It catalyses the reaction gamma-L-glutamyl-L-cysteine + glycine + ATP = glutathione + ADP + phosphate + H(+). It functions in the pathway sulfur metabolism; glutathione biosynthesis; glutathione from L-cysteine and L-glutamate: step 2/2. Its activity is regulated as follows. Inhibited by 7,8-dihydrofolate, methotrexate and trimethoprim. This Escherichia coli (strain K12) protein is Glutathione synthetase (gshB).